Here is an 86-residue protein sequence, read N- to C-terminus: MAQKKGGGSTRNGRDSESKRLGVKVYGGQEILAGSIIVRQRGTRFHPGVNVGVGKDHTLFALADGKVKFGTKGALNKATVWVEAAN.

Over residues 1–10 the composition is skewed to gly residues; sequence MAQKKGGGST. The tract at residues 1-20 is disordered; that stretch reads MAQKKGGGSTRNGRDSESKR.

The protein belongs to the bacterial ribosomal protein bL27 family.

The sequence is that of Large ribosomal subunit protein bL27 from Bordetella avium (strain 197N).